The sequence spans 480 residues: Aromatic-L-amino-acid decarboxylase (480 aa).

Lysine 292 carries the post-translational modification N6-(pyridoxal phosphate)lysine.

The protein belongs to the group II decarboxylase family. Pyridoxal 5'-phosphate is required as a cofactor.

It catalyses the reaction L-tryptophan + H(+) = tryptamine + CO2. The enzyme catalyses L-phenylalanine + H(+) = 2-phenylethylamine + CO2. The catalysed reaction is 5-hydroxy-L-tryptophan + H(+) = serotonin + CO2. It carries out the reaction L-dopa + H(+) = dopamine + CO2. Functionally, involved in bacillamide C biosynthesis. Catalyzes the decarboxylation of L-tryptophan to tryptamine. The tryptamine obtained is then probably incorporated into the bacillamide C peptide, which is derived from the amino acids alanine, cysteine and tryptophan through nonribosomal peptide synthetase (NRPS) biosynthesis strategy. L-tryptophan is the best substrate, but the enzyme displays broad substrate specificity for various aromatic amino acids in vitro and it can also catalyze the decarboxylation of L-phenylalanine, 5-hydroxy-L-tryptophan (L-HTP) and L-DOPA, with lower efficiency. Exhibits weak activity with L-tyrosine. The chain is Aromatic-L-amino-acid decarboxylase from Bacillus atrophaeus.